The primary structure comprises 347 residues: NADH-ubiquinone oxidoreductase chain 2 (347 aa).

9 helical membrane passes run 3–23, 59–79, 93–115, 150–170, 178–198, 200–220, 240–260, 274–294, and 326–346; these read PLAL…TMMS, YFMT…INLM, VASN…HFWV, NTNL…WGGL, ILAY…PFNP, LTLL…MILA, MTIM…LSGF, NSII…YFYT, and LPTL…ISML.

This sequence belongs to the complex I subunit 2 family. As to quaternary structure, core subunit of respiratory chain NADH dehydrogenase (Complex I) which is composed of 45 different subunits. Interacts with TMEM242.

The protein resides in the mitochondrion inner membrane. The enzyme catalyses a ubiquinone + NADH + 5 H(+)(in) = a ubiquinol + NAD(+) + 4 H(+)(out). Core subunit of the mitochondrial membrane respiratory chain NADH dehydrogenase (Complex I) which catalyzes electron transfer from NADH through the respiratory chain, using ubiquinone as an electron acceptor. Essential for the catalytic activity and assembly of complex I. The protein is NADH-ubiquinone oxidoreductase chain 2 of Elephas maximus (Indian elephant).